A 342-amino-acid chain; its full sequence is S-adenosylmethionine:tRNA ribosyltransferase-isomerase (342 aa).

This sequence belongs to the QueA family. As to quaternary structure, monomer.

The protein resides in the cytoplasm. It catalyses the reaction 7-aminomethyl-7-carbaguanosine(34) in tRNA + S-adenosyl-L-methionine = epoxyqueuosine(34) in tRNA + adenine + L-methionine + 2 H(+). It participates in tRNA modification; tRNA-queuosine biosynthesis. Its function is as follows. Transfers and isomerizes the ribose moiety from AdoMet to the 7-aminomethyl group of 7-deazaguanine (preQ1-tRNA) to give epoxyqueuosine (oQ-tRNA). The polypeptide is S-adenosylmethionine:tRNA ribosyltransferase-isomerase (Streptococcus pyogenes serotype M1).